A 115-amino-acid chain; its full sequence is Nucleoid-associated protein LA_4332 (115 aa).

Belongs to the YbaB/EbfC family. In terms of assembly, homodimer.

Its subcellular location is the cytoplasm. It is found in the nucleoid. In terms of biological role, binds to DNA and alters its conformation. May be involved in regulation of gene expression, nucleoid organization and DNA protection. This chain is Nucleoid-associated protein LA_4332, found in Leptospira interrogans serogroup Icterohaemorrhagiae serovar Lai (strain 56601).